The primary structure comprises 501 residues: Aspartate--tRNA ligase, cytoplasmic (501 aa).

Thr52 is modified (phosphothreonine). Lys74 is modified (N6-acetyllysine). Position 229 (Glu229) interacts with L-aspartate. Ser249 is modified (phosphoserine). The interval Gln251–Lys254 is aspartate. An L-aspartate-binding site is contributed by Arg273. ATP contacts are provided by residues Arg273–Glu275 and Arg281–Leu283. Residue Lys374 is modified to N6-acetyllysine. Residues Lys411–Ser415 form a binding site for the 3'-end of tRNA region. Glu424 contributes to the ATP binding site. The L-aspartate site is built by Ser427 and Arg431. Gly472–Arg475 is an ATP binding site. Thr500 carries the post-translational modification Phosphothreonine; by PKA.

It belongs to the class-II aminoacyl-tRNA synthetase family. Type 2 subfamily. Homodimer. Part of a multisubunit complex that groups tRNA ligases for Arg (RARS1), Asp (DARS1), Gln (QARS1), Ile (IARS1), Leu (LARS1), Lys (KARS1), Met (MARS1) the bifunctional ligase for Glu and Pro (EPRS1) and the auxiliary subunits AIMP1/p43, AIMP2/p38 and EEF1E1/p18.

It is found in the cytoplasm. It catalyses the reaction tRNA(Asp) + L-aspartate + ATP = L-aspartyl-tRNA(Asp) + AMP + diphosphate. Its function is as follows. Catalyzes the specific attachment of an amino acid to its cognate tRNA in a 2 step reaction: the amino acid (AA) is first activated by ATP to form AA-AMP and then transferred to the acceptor end of the tRNA. The sequence is that of Aspartate--tRNA ligase, cytoplasmic (DARS1) from Bos taurus (Bovine).